Consider the following 393-residue polypeptide: 2,3,4,5-tetrahydropyridine-2,6-dicarboxylate N-succinyltransferase (393 aa).

The active-site Acyl-anhydride intermediate is Glu-261. Residues Arg-263, Gly-278, Ser-281, Ala-304, 319 to 320 (DA), Gly-327, Lys-356, and 369 to 372 (RQDS) each bind succinyl-CoA.

Belongs to the type 2 tetrahydrodipicolinate N-succinyltransferase family. As to quaternary structure, homotrimer.

The protein resides in the cytoplasm. It catalyses the reaction (S)-2,3,4,5-tetrahydrodipicolinate + succinyl-CoA + H2O = (S)-2-succinylamino-6-oxoheptanedioate + CoA. It functions in the pathway amino-acid biosynthesis; L-lysine biosynthesis via DAP pathway; LL-2,6-diaminopimelate from (S)-tetrahydrodipicolinate (succinylase route): step 1/3. Functionally, catalyzes the conversion of the cyclic tetrahydrodipicolinate (THDP) into the acyclic N-succinyl-L-2-amino-6-oxopimelate using succinyl-CoA. The polypeptide is 2,3,4,5-tetrahydropyridine-2,6-dicarboxylate N-succinyltransferase (Nitratiruptor sp. (strain SB155-2)).